The chain runs to 144 residues: MAPVLENRRARHDYEILETYEAGIALKGTEVKSLRAGKVDFTGSFARFEDGELYLENLYIAPYEKGSYANVDPRRKRKLLLHKHELRRLLGKVEQKGLTLVPLKIYFNERGYAKVLLGLARGKKAYEKRREDKKEAVRRALEEL.

Belongs to the SmpB family.

The protein localises to the cytoplasm. Functionally, required for rescue of stalled ribosomes mediated by trans-translation. Binds to transfer-messenger RNA (tmRNA), required for stable association of tmRNA with ribosomes. tmRNA and SmpB together mimic tRNA shape, replacing the anticodon stem-loop with SmpB. tmRNA is encoded by the ssrA gene; the 2 termini fold to resemble tRNA(Ala) and it encodes a 'tag peptide', a short internal open reading frame. During trans-translation Ala-aminoacylated tmRNA acts like a tRNA, entering the A-site of stalled ribosomes, displacing the stalled mRNA. The ribosome then switches to translate the ORF on the tmRNA; the nascent peptide is terminated with the 'tag peptide' encoded by the tmRNA and targeted for degradation. The ribosome is freed to recommence translation, which seems to be the essential function of trans-translation. This is SsrA-binding protein from Thermus thermophilus (strain ATCC BAA-163 / DSM 7039 / HB27).